Reading from the N-terminus, the 367-residue chain is MAIRVTFTYSSYVARSIASSAGTRVGTGDVRSCFETWVRPRFCGHNQIPDIVDKSPGSNTWGPSSGPRARPASSMYSTIAREILEEGCKSPLVLGMISLMNLTGAPQFSGMTGLGISPFKTSSVIPFLRGSKWMPCSIPATLSTDIAEVDRGGKVCDPKVKLELSDKVSNGGNGWVNKLLNICSEDAKAAFTAVTVSLLFRSALAEPKSIPSTSMLPTLDVGDRVIAEKVSYFFRKPEVSDIVIFKAPPILVEHGYSCADVFIKRIVASEGDWVEVCDGKLLVNDTVQAEDFVLEPIDYEMEPMFVPEGYVFVLGDNRNKSFDSHNWGPLPIKNIIGRSVFRYWPPSKVSDIIHHEQVSQKRAVDVS.

A chloroplast-targeting transit peptide spans 1–68 (MAIRVTFTYS…NTWGPSSGPR (68 aa)). A disordered region spans residues 53 to 72 (DKSPGSNTWGPSSGPRARPA). Over residues 62 to 72 (GPSSGPRARPA) the composition is skewed to low complexity. A helical membrane pass occupies residues 185-205 (EDAKAAFTAVTVSLLFRSALA). Residues 206-367 (EPKSIPSTSM…VSQKRAVDVS (162 aa)) lie on the Lumenal, thylakoid side of the membrane. The active site involves Ser-214.

It belongs to the peptidase S26 family.

It is found in the plastid. The protein resides in the chloroplast thylakoid membrane. It catalyses the reaction Cleavage of hydrophobic, N-terminal signal or leader sequences from secreted and periplasmic proteins.. Its function is as follows. Cleaves the thylakoid-transfer domain from a chloroplast protein. The protein is Probable thylakoidal processing peptidase 2, chloroplastic (TPP2) of Arabidopsis thaliana (Mouse-ear cress).